Here is a 75-residue protein sequence, read N- to C-terminus: Small ribosomal subunit protein bS18 (75 aa).

This sequence belongs to the bacterial ribosomal protein bS18 family. In terms of assembly, part of the 30S ribosomal subunit. Forms a tight heterodimer with protein bS6.

Its function is as follows. Binds as a heterodimer with protein bS6 to the central domain of the 16S rRNA, where it helps stabilize the platform of the 30S subunit. The protein is Small ribosomal subunit protein bS18 of Laribacter hongkongensis (strain HLHK9).